A 472-amino-acid polypeptide reads, in one-letter code: Argininosuccinate lyase (472 aa).

It belongs to the lyase 1 family. Argininosuccinate lyase subfamily.

It localises to the cytoplasm. It catalyses the reaction 2-(N(omega)-L-arginino)succinate = fumarate + L-arginine. The protein operates within amino-acid biosynthesis; L-arginine biosynthesis; L-arginine from L-ornithine and carbamoyl phosphate: step 3/3. This is Argininosuccinate lyase from Mycobacterium avium (strain 104).